A 135-amino-acid polypeptide reads, in one-letter code: C-type natriuretic peptide (135 aa).

The first 25 residues, 1 to 25, serve as a signal peptide directing secretion; it reads MSGHTSFYCGLLLLLLIQVQARPRA. Positions 26 to 113 are excised as a propeptide; it reads DDSLQVLSRL…PLRFKGRSKK (88 aa). The disordered stretch occupies residues 46–67; the sequence is EELNNEAQEISPAASLPDLNTD. C119 and C135 are disulfide-bonded.

Belongs to the natriuretic peptide family.

The protein localises to the secreted. Functionally, hormone which may be vasoactive and natriuretic. Has a cGMP-stimulating activity. The sequence is that of C-type natriuretic peptide from Squalus acanthias (Spiny dogfish).